Here is a 74-residue protein sequence, read N- to C-terminus: uncharacterized protein (74 aa).

A helical membrane pass occupies residues 54 to 72; it reads LIIPRFLLLIYSVIQCLFL.

The protein resides in the membrane. This is an uncharacterized protein from Saccharomyces cerevisiae (strain ATCC 204508 / S288c) (Baker's yeast).